Consider the following 183-residue polypeptide: Peptidyl-tRNA hydrolase (183 aa).

Y15 contributes to the tRNA binding site. H20 serves as the catalytic Proton acceptor. Residues Y67 and N69 each contribute to the tRNA site.

The protein belongs to the PTH family. As to quaternary structure, monomer.

The protein resides in the cytoplasm. It carries out the reaction an N-acyl-L-alpha-aminoacyl-tRNA + H2O = an N-acyl-L-amino acid + a tRNA + H(+). Functionally, hydrolyzes ribosome-free peptidyl-tRNAs (with 1 or more amino acids incorporated), which drop off the ribosome during protein synthesis, or as a result of ribosome stalling. Catalyzes the release of premature peptidyl moieties from peptidyl-tRNA molecules trapped in stalled 50S ribosomal subunits, and thus maintains levels of free tRNAs and 50S ribosomes. This chain is Peptidyl-tRNA hydrolase, found in Chlamydia abortus (strain DSM 27085 / S26/3) (Chlamydophila abortus).